The sequence spans 777 residues: Protein translocase subunit SecA (777 aa).

ATP contacts are provided by residues Gln-94, 112–116 (GEGKT), and Asp-501.

It belongs to the SecA family. As to quaternary structure, monomer and homodimer. Part of the essential Sec protein translocation apparatus which comprises SecA, SecYEG and auxiliary proteins SecDF. Other proteins may also be involved.

The protein resides in the cell membrane. It is found in the cytoplasm. The catalysed reaction is ATP + H2O + cellular proteinSide 1 = ADP + phosphate + cellular proteinSide 2.. Its function is as follows. Part of the Sec protein translocase complex. Interacts with the SecYEG preprotein conducting channel. Has a central role in coupling the hydrolysis of ATP to the transfer of proteins into and across the cell membrane, serving as an ATP-driven molecular motor driving the stepwise translocation of polypeptide chains across the membrane. The protein is Protein translocase subunit SecA of Mycobacterium avium (strain 104).